We begin with the raw amino-acid sequence, 133 residues long: Lymphocyte antigen 6 complex locus protein G6d (133 aa).

Positions 1 to 19 (MKPQFVGILLSSLLGAALG) are cleaved as a signal peptide. Residues 22–116 (MRCYNCGGSP…ASHVAPAGIL (95 aa)) form the UPAR/Ly6 domain. Cys-27 and Cys-35 are joined by a disulfide. O-linked (GalNAc...) threonine glycans are attached at residues Thr-40 and Thr-41. Intrachain disulfides connect Cys-42–Cys-71 and Cys-77–Cys-96. Ser-104 carries the GPI-anchor amidated serine lipid modification. Positions 105-133 (AVASHVAPAGILAAAATALTCLLPGLWSG) are cleaved as a propeptide — removed in mature form.

In terms of assembly, homodimer. O-glycosylated. In terms of tissue distribution, expressed in the adult lung, and in fetal liver, lung, kidney, brain and spleen.

It localises to the cell membrane. The protein localises to the cell projection. It is found in the filopodium. The chain is Lymphocyte antigen 6 complex locus protein G6d (LY6G6D) from Homo sapiens (Human).